The sequence spans 296 residues: MEQFRNIGIIGRLGSSQVLDTIRRLKKFLLDRHLHVILEDTIAEVLPGHGLQTSTRKLLGEVCDLVIVVGGDGSLLGAARALARHNIPVLGINRGNLGFLTDIRPDELEQKVAEVLDGHYLVENRFLLQAEVRRHHEAIGQGDALNDVVLHPGKSTRMIEFEIYIDGQFVCSQKADGLIVATPTGSTAYALSAGGPIMHPKLDAIVIVPMYPHTLSGRPIVVDGNSELKIVVSKDLQIYPQVSCDGQNHFTCAPGDTITVSKKPQKLRLIHPLDHNYYEVCRTKLGWGSRLGSSDD.

D72 functions as the Proton acceptor in the catalytic mechanism. NAD(+) contacts are provided by residues D72–G73, N146–D147, R157, K174, D176, T187–S192, and Q247.

Belongs to the NAD kinase family. A divalent metal cation serves as cofactor.

It is found in the cytoplasm. The enzyme catalyses NAD(+) + ATP = ADP + NADP(+) + H(+). In terms of biological role, involved in the regulation of the intracellular balance of NAD and NADP, and is a key enzyme in the biosynthesis of NADP. Catalyzes specifically the phosphorylation on 2'-hydroxyl of the adenosine moiety of NAD to yield NADP. The protein is NAD kinase of Pseudomonas putida (strain ATCC 700007 / DSM 6899 / JCM 31910 / BCRC 17059 / LMG 24140 / F1).